A 194-amino-acid chain; its full sequence is MRLCDTDIERYLDQGIISLTPRPSNEKINGATIDVRLGNSFRVFREHTAPFIDLSGPKEEVTAQLDAVMSDEIIIGENEAFFLHPGELALATTLEAVKLPANIIGWLDGRSSLARLGLMVHVTAHRIDPGWEGKIVLEFFNSGKLPLALRPNMVIGALSFEVLSGTAARPYTSRKDAKYKHQQSAVASRISEDK.

Residues 110-115, D128, 136-138, Y171, K178, and Q182 each bind dCTP; these read RSSLAR and VLE. E138 serves as the catalytic Proton donor/acceptor.

This sequence belongs to the dCTP deaminase family. Homotrimer.

It catalyses the reaction dCTP + H2O + H(+) = dUTP + NH4(+). It participates in pyrimidine metabolism; dUMP biosynthesis; dUMP from dCTP (dUTP route): step 1/2. Its function is as follows. Catalyzes the deamination of dCTP to dUTP. The protein is dCTP deaminase of Histophilus somni (strain 2336) (Haemophilus somnus).